The sequence spans 370 residues: Acyl-CoA:lysophosphatidylglycerol acyltransferase 1 (370 aa).

A helical transmembrane segment spans residues 22–42 (FAFMVANNLVAIPSYICYVII). Residues 101–106 (HQATGD) carry the HXXXXD motif motif. The chain crosses the membrane as a helical span at residues 342–362 (MWIFLIQSFAFLSGYLWYHII).

Belongs to the 1-acyl-sn-glycerol-3-phosphate acyltransferase family. As to expression, ubiquitous. Expressed in heart, kidney, liver, skin, intestine, and thymus. Highest expression is detected in brain and testis.

It localises to the endoplasmic reticulum membrane. The catalysed reaction is a 2-acyl-sn-glycero-3-phosphoethanolamine + octadecanoyl-CoA = 1-octadecanoyl-2-acyl-sn-glycero-3-phosphoethanolamine + CoA. It carries out the reaction 2-(9Z-octadecenoyl)-sn-glycero-3-phosphoethanolamine + octadecanoyl-CoA = 1-octadecanoyl-2-(9Z-octadecenoyl)-sn-glycero-3-phosphoethanolamine + CoA. The enzyme catalyses a 2-acyl-sn-glycero-3-phosphoethanolamine + hexadecanoyl-CoA = 1-hexadecanoyl-2-acyl-sn-glycero-3-phosphoethanolamine + CoA. It catalyses the reaction 2-(9Z-octadecenoyl)-sn-glycero-3-phosphoethanolamine + hexadecanoyl-CoA = 1-hexadecanoyl-2-(9Z-octadecenoyl)-sn-glycero-3-phosphoethanolamine + CoA. The catalysed reaction is 1-tetradecanoyl-sn-glycero-3-phospho-(1'-sn-glycerol) + hexadecanoyl-CoA = 1-tetradecanoyl-2-hexadecanoyl-sn-glycero-3-phospho-(1'-sn-glycerol) + CoA. It carries out the reaction 1-hexadecanoyl-sn-glycero-3-phospho-(1'-sn-glycerol) + dodecanoyl-CoA = 1-hexadecanoyl-2-dodecanoyl-sn-glycero-3-phospho-(1'-sn-glycerol) + CoA. The enzyme catalyses 1-hexadecanoyl-sn-glycero-3-phospho-(1'-sn-glycerol) + hexadecanoyl-CoA = 1,2-dihexadecanoyl-sn-glycero-3-phospho-(1'-sn-glycerol) + CoA. It catalyses the reaction 1-hexadecanoyl-sn-glycero-3-phospho-(1'-sn-glycerol) + octadecanoyl-CoA = 1-hexadecanoyl-2-octadecanoyl-sn-glycero-3-phospho-(1'-sn-glycerol) + CoA. The catalysed reaction is 1-octadecanoyl-sn-glycero-3-phospho-(1'-sn-glycerol) + hexadecanoyl-CoA = 1-octadecanoyl-2-hexadecanoyl-sn-glycero-3-phospho-(1'-sn-glycerol) + CoA. It carries out the reaction 1-(9Z-octadecenoyl)-sn-glycero-3-phospho-(1'-sn-glycerol) + dodecanoyl-CoA = 1-(9Z-octadecenoyl)-2-dodecanoyl-sn-glycero-3-phospho-(1'-sn-glycerol) + CoA. The enzyme catalyses 1-hexadecanoyl-sn-glycero-3-phospho-(1'-sn-glycerol) + (9Z)-octadecenoyl-CoA = 1-hexadecanoyl-2-(9Z-octadecenoyl)-sn-glycero-3-phospho-(1'-sn-glycerol) + CoA. It catalyses the reaction 1-(9Z-octadecenoyl)-sn-glycero-3-phospho-(1'-sn-glycerol) + hexadecanoyl-CoA = 1-(9Z-octadecenoyl)-2-hexadecanoyl-sn-glycero-3-phospho-(1'-sn-glycerol) + CoA. The catalysed reaction is 1-(9Z-octadecenoyl)-sn-glycero-3-phospho-(1'-sn-glycerol) + (9Z)-octadecenoyl-CoA = 1,2-di-(9Z-octadecenoyl)-sn-glycero-3-phospho-(1'-sn-glycerol) + CoA. It carries out the reaction a 2-acylglycerol + an acyl-CoA = a 1,2-diacylglycerol + CoA. The enzyme catalyses a 2-acylglycerol + hexadecanoyl-CoA = a 1-hexadecanoyl-2-acylglycerol + CoA. It catalyses the reaction a 1-acylglycerol + hexadecanoyl-CoA = an hexadecanoyl-acylglycerol + CoA. The catalysed reaction is a 2-acyl-sn-glycero-3-phosphocholine + an acyl-CoA = a 1,2-diacyl-sn-glycero-3-phosphocholine + CoA. It carries out the reaction 2-(9Z-octadecenoyl)-sn-glycero-3-phosphocholine + octadecanoyl-CoA = 1-octadecanoyl-2-(9Z-octadecenoyl)-sn-glycero-3-phosphocholine + CoA. The enzyme catalyses 2-(9Z,12Z-octadecadienoyl)-sn-glycero-3-phosphocholine + octadecanoyl-CoA = 1-octadecanoyl-2-(9Z,12Z)-octadecadienoyl-sn-glycero-3-phosphocholine + CoA. It catalyses the reaction 2-(5Z,8Z,11Z,14Z)-eicosatetraenoyl-sn-glycero-3-phosphocholine + octadecanoyl-CoA = 1-octadecanoyl-2-(5Z,8Z,11Z,14Z-eicosatetraenoyl)-sn-glycero-3-phosphocholine + CoA. The catalysed reaction is 2-(9Z-octadecenoyl)-sn-glycero-3-phosphocholine + hexadecanoyl-CoA = 1-hexadecanoyl-2-(9Z-octadecenoyl)-sn-glycero-3-phosphocholine + CoA. It carries out the reaction 2-(9Z-octadecenoyl)-sn-glycero-3-phospho-L-serine + hexadecanoyl-CoA = 1-hexadecanoyl-2-(9Z-octadecenoyl)-sn-glycero-3-phospho-L-serine + CoA. The enzyme catalyses 2-(4Z,7Z,10Z,13Z,16Z,19Z-docosahexaenoyl)-sn-glycero-3-phosphocholine + octadecanoyl-CoA = 1-octadecanoyl-2-(4Z,7Z,10Z,13Z,16Z,19Z-docosahexaenoyl)-sn-glycero-3-phosphocholine + CoA. It catalyses the reaction 1-(9Z-octadecenoyl)-sn-glycero-3-phospho-L-serine + octadecanoyl-CoA = 1-(9Z-octadecenoyl)-2-octadecanoyl-sn-glycero-3-phospho-L-serine + CoA. The catalysed reaction is a 2-acyl-sn-glycero-3-phosphoethanolamine + a fatty acyl-CoA = a 1,2-diacyl-sn-glycero-3-phosphoethanolamine + CoA. Lysophospholipid acyltransferase involved in fatty acyl chain remodeling of glycerophospholipids in the endoplasmic reticulum membrane. Selectively catalyzes the transfer and esterification of saturated long-chain fatty acids from acyl-CoA to the sn-1 position of 1-lyso-2-acyl phosphatidylethanolamines (1-lyso-PE, LPE), with a preference for stearoyl CoA over palmitoyl CoA as acyl donor. Acts in concert with an unknown phospholipase A1 to convert palmitate PE species into stearate ones. Provides substrates to the PE methylation pathway, controlling stearate/palmitate composition of PE and phosphatidylcholine (PC) species with an overall impact on de novo hepatic lipid synthesis, body fat content and life span. Can acylate lysophosphatidylglycerols (LPG) using various saturated fatty acyl-CoAs as acyl donors. Can also acylate monoacylglycerols with a preference for 2-monoacylglycerols over 1-monoacylglycerols. Has no activity toward lysophosphatidic acids (LPA) and lysophosphatidylcholines (LPC). This Mus musculus (Mouse) protein is Acyl-CoA:lysophosphatidylglycerol acyltransferase 1.